The chain runs to 263 residues: Small ribosomal subunit protein bS1c (263 aa).

3 S1 motif domains span residues 27 to 96 (GDIV…LSIR), 114 to 178 (DSLL…LSHR), and 192 to 260 (GNII…LSMK).

Belongs to the bacterial ribosomal protein bS1 family.

Its subcellular location is the plastid. The protein localises to the chloroplast. This is Small ribosomal subunit protein bS1c (rps1) from Pyropia yezoensis (Susabi-nori).